We begin with the raw amino-acid sequence, 235 residues long: Serine protease SplA (235 aa).

Positions 1 to 35 (MNKNVMIKGLTALTILTSLGFAENISDQPHSIAKA) are cleaved as a signal peptide. Active-site charge relay system residues include H74, D113, and S189.

It belongs to the peptidase S1B family.

The protein resides in the secreted. This is Serine protease SplA (splA) from Staphylococcus aureus.